The primary structure comprises 261 residues: 5-oxoprolinase subunit A (261 aa).

This sequence belongs to the LamB/PxpA family. As to quaternary structure, forms a complex composed of PxpA, PxpB and PxpC.

It catalyses the reaction 5-oxo-L-proline + ATP + 2 H2O = L-glutamate + ADP + phosphate + H(+). In terms of biological role, catalyzes the cleavage of 5-oxoproline to form L-glutamate coupled to the hydrolysis of ATP to ADP and inorganic phosphate. The polypeptide is 5-oxoprolinase subunit A (Symbiobacterium thermophilum (strain DSM 24528 / JCM 14929 / IAM 14863 / T)).